Consider the following 230-residue polypeptide: 2,3-bisphosphoglycerate-dependent phosphoglycerate mutase (230 aa).

Residues 8 to 15 (RHGESEWN), 21 to 22 (TG), Arg-60, 87 to 90 (ERHY), Lys-98, 114 to 115 (RR), and 183 to 184 (GN) each bind substrate. Catalysis depends on His-9, which acts as the Tele-phosphohistidine intermediate. Glu-87 serves as the catalytic Proton donor/acceptor.

Belongs to the phosphoglycerate mutase family. BPG-dependent PGAM subfamily.

The enzyme catalyses (2R)-2-phosphoglycerate = (2R)-3-phosphoglycerate. The protein operates within carbohydrate degradation; glycolysis; pyruvate from D-glyceraldehyde 3-phosphate: step 3/5. In terms of biological role, catalyzes the interconversion of 2-phosphoglycerate and 3-phosphoglycerate. The protein is 2,3-bisphosphoglycerate-dependent phosphoglycerate mutase of Streptococcus agalactiae serotype Ia (strain ATCC 27591 / A909 / CDC SS700).